A 718-amino-acid polypeptide reads, in one-letter code: Glycine--tRNA ligase beta subunit (718 aa).

This sequence belongs to the class-II aminoacyl-tRNA synthetase family. As to quaternary structure, tetramer of two alpha and two beta subunits.

It is found in the cytoplasm. It carries out the reaction tRNA(Gly) + glycine + ATP = glycyl-tRNA(Gly) + AMP + diphosphate. This is Glycine--tRNA ligase beta subunit from Mesorhizobium japonicum (strain LMG 29417 / CECT 9101 / MAFF 303099) (Mesorhizobium loti (strain MAFF 303099)).